Reading from the N-terminus, the 409-residue chain is Putative competence-damage inducible protein (409 aa).

This sequence belongs to the CinA family.

In Clostridium botulinum (strain 657 / Type Ba4), this protein is Putative competence-damage inducible protein.